Here is a 134-residue protein sequence, read N- to C-terminus: UPF0357 protein AAL017W (134 aa).

The first 23 residues, 1-23, serve as a signal peptide directing secretion; that stretch reads MFGLISLWHLFWLAVMAGILVVA.

Belongs to the UPF0357 family.

This chain is UPF0357 protein AAL017W, found in Eremothecium gossypii (strain ATCC 10895 / CBS 109.51 / FGSC 9923 / NRRL Y-1056) (Yeast).